The primary structure comprises 386 residues: Large ribosomal subunit protein uL4 (386 aa).

A compositionally biased stretch (basic and acidic residues) spans valine 341–arginine 357. The segment at valine 341–lysine 386 is disordered. A compositionally biased stretch (basic residues) spans glycine 369–lysine 386.

This sequence belongs to the universal ribosomal protein uL4 family.

This is Large ribosomal subunit protein uL4 (RPL4) from Urechis caupo (Innkeeper worm).